A 716-amino-acid polypeptide reads, in one-letter code: MCCGSDRLNQIVSSRSSLPISFEEDNNLVTNTDMNHLTVETEDTFASLLELAANNDVEGVRLSIERDPSCVDEAGLWYGRQKGSKAMVNDYRTPLMVAATYGSIDVIKLIVSLTDADVNRACGNDQTTALHCAASGGAVNAIQVVKLLLAAGADLNLLDAEGQRAGDVIVVPPKLEGVKLMLQELLSADGSSTAERNLRVVTNVPNRSSSPCHSPTGENGGSGSGSPLGSPFKLKSTEFKKEYPVDPSLPDIKNSIYATDEFRMYSFKVRPCSRAYSHDWTECPFVHPGENARRRDPRKFHYSCVPCPDFRKGACRRGDMCEYAHGVFECWLHPAQYRTRLCKDGTGCARRVCFFAHTPEELRPLYASTGSAVPSPRSNADYAAALSLLPGSPSGVSVMSPLSPSAAGNGMSHSNMAWPQPNVPALHLPGSNLQSSRLRSSLNARDIPTDEFNMLADYEQQQLLNEYSNALSRSGRMKSMPPSNLEDLFSAEGSSSPRFTDSALASAVFSPTHKSAVFNQFQQQQQQQQSMLSPINTSFSSPKSVDHSLFSGGGRMSPRNVVEPISPMSARVSMLAQCVKQQQQQQQQQQQQHQFRSLSSRELRTNSSPIVGSPVNNNTWSSKWGSSNGQPDWGMSSEALGKLRSSSSFDGDEPDVSWVQSLVKETPAEAKEKAATSSSGEHVMKQPNPVEPVMDHAGLEAWIEQMQLDQLVAQQN.

2 ANK repeats span residues D90–R120 and D125–L157. Residues V201–P231 form a disordered region. Residues N203–H213 show a composition bias toward polar residues. 2 C3H1-type zinc fingers span residues P306 to F328 and Q336 to E360. Positions F521–V562 are disordered. Residues S530–K543 are compositionally biased toward polar residues. S566 carries the post-translational modification Phosphoserine. The span at Q583–Q594 shows a compositional bias: low complexity. Disordered regions lie at residues Q583–E638 and P667–P692. A compositionally biased stretch (polar residues) spans T605 to Q630.

The sequence is that of Zinc finger CCCH domain-containing protein 30 from Arabidopsis thaliana (Mouse-ear cress).